The following is a 529-amino-acid chain: Chromosomal replication initiator protein DnaA (529 aa).

The segment at 1-72 (MQDFWHAASA…SLACDYWEAT (72 aa)) is domain I, interacts with DnaA modulators. Residues 72-192 (TVDVQFVLDP…HVDDSVHERS (121 aa)) form a domain II region. The segment at 193 to 409 (RLNQILTFDN…GALRKILAYS (217 aa)) is domain III, AAA+ region. ATP contacts are provided by G237, G239, K240, and T241. A domain IV, binds dsDNA region spans residues 410 to 529 (NFHGKEITIE…LHVLEQTLKG (120 aa)).

It belongs to the DnaA family. In terms of assembly, oligomerizes as a right-handed, spiral filament on DNA at oriC.

The protein localises to the cytoplasm. Its function is as follows. Plays an essential role in the initiation and regulation of chromosomal replication. ATP-DnaA binds to the origin of replication (oriC) to initiate formation of the DNA replication initiation complex once per cell cycle. Binds the DnaA box (a 9 base pair repeat at the origin) and separates the double-stranded (ds)DNA. Forms a right-handed helical filament on oriC DNA; dsDNA binds to the exterior of the filament while single-stranded (ss)DNA is stabiized in the filament's interior. The ATP-DnaA-oriC complex binds and stabilizes one strand of the AT-rich DNA unwinding element (DUE), permitting loading of DNA polymerase. After initiation quickly degrades to an ADP-DnaA complex that is not apt for DNA replication. Binds acidic phospholipids. The sequence is that of Chromosomal replication initiator protein DnaA from Ralstonia pickettii (strain 12J).